A 128-amino-acid chain; its full sequence is Large ribosomal subunit protein mL51 (128 aa).

The transit peptide at 1–31 directs the protein to the mitochondrion; sequence MAGSVPWAASRRLWGWVPSACRSFSLGVPRL.

It belongs to the mitochondrion-specific ribosomal protein mL51 family. As to quaternary structure, component of the mitochondrial ribosome large subunit (39S) which comprises a 16S rRNA and about 50 distinct proteins. Interacts with OXA1L.

The protein localises to the mitochondrion. The protein is Large ribosomal subunit protein mL51 (Mrpl51) of Mus musculus (Mouse).